A 329-amino-acid polypeptide reads, in one-letter code: Fructose-1,6-bisphosphatase class 1 2 (329 aa).

Mg(2+) contacts are provided by glutamate 92, aspartate 111, leucine 113, and aspartate 114. Substrate is bound by residues 114 to 117 (DGSS) and asparagine 206. Residue glutamate 278 participates in Mg(2+) binding.

Belongs to the FBPase class 1 family. In terms of assembly, homotetramer. Mg(2+) serves as cofactor.

It is found in the cytoplasm. It catalyses the reaction beta-D-fructose 1,6-bisphosphate + H2O = beta-D-fructose 6-phosphate + phosphate. Its pathway is carbohydrate biosynthesis; gluconeogenesis. The sequence is that of Fructose-1,6-bisphosphatase class 1 2 from Xanthobacter autotrophicus (strain ATCC BAA-1158 / Py2).